Reading from the N-terminus, the 433-residue chain is GTPase Der (433 aa).

2 EngA-type G domains span residues 3-167 (NRVV…KEEK) and 175-347 (IKVA…KDYT). GTP contacts are provided by residues 9–16 (GRPNVGKS), 56–60 (DTGGL), 119–122 (NKID), 181–188 (GRPNVGKS), 228–232 (DTAGV), and 293–296 (NKMD). Residues 348 to 432 (KQHKTSFVNR…PIKLVIKGRE (85 aa)) form the KH-like domain.

Belongs to the TRAFAC class TrmE-Era-EngA-EngB-Septin-like GTPase superfamily. EngA (Der) GTPase family. As to quaternary structure, associates with the 50S ribosomal subunit.

GTPase that plays an essential role in the late steps of ribosome biogenesis. This Aquifex aeolicus (strain VF5) protein is GTPase Der.